Consider the following 298-residue polypeptide: GTP cyclohydrolase FolE2 (298 aa).

The protein belongs to the GTP cyclohydrolase IV family.

It carries out the reaction GTP + H2O = 7,8-dihydroneopterin 3'-triphosphate + formate + H(+). Its pathway is cofactor biosynthesis; 7,8-dihydroneopterin triphosphate biosynthesis; 7,8-dihydroneopterin triphosphate from GTP: step 1/1. Its function is as follows. Converts GTP to 7,8-dihydroneopterin triphosphate. The sequence is that of GTP cyclohydrolase FolE2 from Xylella fastidiosa (strain 9a5c).